The primary structure comprises 567 residues: Urease subunit alpha (567 aa).

In terms of domain architecture, Urease spans glycine 129–phenylalanine 567. Histidine 134, histidine 136, and lysine 217 together coordinate Ni(2+). Position 217 is an N6-carboxylysine (lysine 217). A substrate-binding site is contributed by histidine 219. Ni(2+) is bound by residues histidine 246 and histidine 272. The active-site Proton donor is histidine 320. Ni(2+) is bound at residue aspartate 360.

Belongs to the metallo-dependent hydrolases superfamily. Urease alpha subunit family. In terms of assembly, heterotrimer of UreA (gamma), UreB (beta) and UreC (alpha) subunits. Three heterotrimers associate to form the active enzyme. The cofactor is Ni cation. Carboxylation allows a single lysine to coordinate two nickel ions.

It is found in the cytoplasm. It carries out the reaction urea + 2 H2O + H(+) = hydrogencarbonate + 2 NH4(+). The protein operates within nitrogen metabolism; urea degradation; CO(2) and NH(3) from urea (urease route): step 1/1. The chain is Urease subunit alpha from Klebsiella pneumoniae (strain 342).